The following is a 129-amino-acid chain: Cytochrome c oxidase subunit 5B, mitochondrial (129 aa).

The N-terminal 31 residues, 1 to 31 (MASRLLRGAGALAAQTLRARGPNGVAVVRSM), are a transit peptide targeting the mitochondrion. N6-acetyllysine is present on residues lysine 68 and lysine 86. Zn(2+) contacts are provided by cysteine 91, cysteine 93, cysteine 113, and cysteine 116. Lysine 121 is modified (N6-acetyllysine).

It belongs to the cytochrome c oxidase subunit 5B family. As to quaternary structure, component of the cytochrome c oxidase (complex IV, CIV), a multisubunit enzyme composed of 14 subunits. The complex is composed of a catalytic core of 3 subunits MT-CO1, MT-CO2 and MT-CO3, encoded in the mitochondrial DNA, and 11 supernumerary subunits COX4I, COX5A, COX5B, COX6A, COX6B, COX6C, COX7A, COX7B, COX7C, COX8 and NDUFA4, which are encoded in the nuclear genome. The complex exists as a monomer or a dimer and forms supercomplexes (SCs) in the inner mitochondrial membrane with NADH-ubiquinone oxidoreductase (complex I, CI) and ubiquinol-cytochrome c oxidoreductase (cytochrome b-c1 complex, complex III, CIII), resulting in different assemblies (supercomplex SCI(1)III(2)IV(1) and megacomplex MCI(2)III(2)IV(2)).

The protein localises to the mitochondrion inner membrane. The protein operates within energy metabolism; oxidative phosphorylation. In terms of biological role, component of the cytochrome c oxidase, the last enzyme in the mitochondrial electron transport chain which drives oxidative phosphorylation. The respiratory chain contains 3 multisubunit complexes succinate dehydrogenase (complex II, CII), ubiquinol-cytochrome c oxidoreductase (cytochrome b-c1 complex, complex III, CIII) and cytochrome c oxidase (complex IV, CIV), that cooperate to transfer electrons derived from NADH and succinate to molecular oxygen, creating an electrochemical gradient over the inner membrane that drives transmembrane transport and the ATP synthase. Cytochrome c oxidase is the component of the respiratory chain that catalyzes the reduction of oxygen to water. Electrons originating from reduced cytochrome c in the intermembrane space (IMS) are transferred via the dinuclear copper A center (CU(A)) of subunit 2 and heme A of subunit 1 to the active site in subunit 1, a binuclear center (BNC) formed by heme A3 and copper B (CU(B)). The BNC reduces molecular oxygen to 2 water molecules using 4 electrons from cytochrome c in the IMS and 4 protons from the mitochondrial matrix. This Sus scrofa (Pig) protein is Cytochrome c oxidase subunit 5B, mitochondrial (COX5B).